An 894-amino-acid chain; its full sequence is MILLAVLFLCFFSSYSASVKGHTTGLSLNNERLYKLTYSTEVFLDGGKGKPQDSVGYKISSDVDVVLLWRNPDGDDDQVIQVTITAVNVENAGQQRGEKSIFQGKSTPKIIGKDNLEALQRPMLLHLVRGKVKEFYSYENEPVGIENLKRGLASLFQMQLSSGTTNEVDISGDCKVTYQAQQDKVVKIKALDTCKIERSGFTTANQVLGVSSKATSVTTYKIEDSFVTAVLAEETRAFALNFQQTIAGKIVSKQKLELKTTEAGPRMIPGKQVAGVIKAVDSKYKAIPIVGQVLERVCKGCPSLAEHWKSIRKNLEPENLSKAEAVQSFLAFIQHLRTSRREEILQILKAEKKEVLPQLVDAVTSAQTPDSLEAILDFLDFKSDSSIILQERFLYACGFATHPDEELLRALLSKFKGSFASNDIRESVMIIIGALVRKLCQNEGCKLKAVVEAKKLILGGLEKPEKKEDTTMYLLALKNALLPEGIPLLLKYAEAGEGPVSHLATTVLQRYDVSFITDEVKKTLNRIYHQNRKVHEKTVRTTAAAVILKNPSYMDVKNILLSIGELPKEMNKYMLTVVQDILHFEMPASKMIRRVLKEMAVHNYDRFSKSGSSSAYTGYVERSPRAASTYSLDILYSGSGILRRSNLNIFQYIGKAELHGSQVVIEAQGLEGLIAATPDEGEENLDSYAGMSAILFDVQLRPVTFFNGYSDLMSKMLSASGDPVSVVKGLILLIDHSQDIQLQSGLKANMEIQGGLAIDISGSMEFSLWYRESKTRVKNRVAVVITSDVTVDASFVKAGVESRAETEAGLEFISTVQFSQYPFLVCMQMDKAEAPLRQFETKYERLSTGRGYVSRRRKESLVAGCELPLHQENSEMCNVVFPPQPESDNSGGWF.

Residues 1–21 form the signal peptide; that stretch reads MILLAVLFLCFFSSYSASVKG. One can recognise a Vitellogenin domain in the interval 28–658; the sequence is LNNERLYKLT…IFQYIGKAEL (631 aa). An intrachain disulfide couples Cys174 to Cys194.

Interacts with PRAP1. As to quaternary structure, heterodimer; heterodimerizes with the protein disulfide isomerase (P4HB/PDI). Interacts with APOB. In terms of assembly, heterodimer; heterodimerizes with the protein disulfide isomerase (P4HB/PDI). In terms of processing, cleaved by signal peptidase between residues Gln-33 and Asn-34. In terms of tissue distribution, mainly expressed in the intestine and the liver, and at lower levels in white and brown fat cells. Expressed in heart. As to expression, ubiquitous, and is the major isoform in hematopoietic cells and adipocytes.

The protein resides in the endoplasmic reticulum. It is found in the golgi apparatus. It catalyses the reaction a 1,2-diacyl-sn-glycero-3-phosphocholine(in) = a 1,2-diacyl-sn-glycero-3-phosphocholine(out). The catalysed reaction is a 1,2-diacyl-sn-glycero-3-phosphoethanolamine(in) = a 1,2-diacyl-sn-glycero-3-phosphoethanolamine(out). The enzyme catalyses a cholesterol ester(in) = a cholesterol ester(out). It carries out the reaction a triacyl-sn-glycerol(in) = a triacyl-sn-glycerol(out). In terms of biological role, catalyzes the transport of triglyceride, cholesteryl ester, and phospholipid between phospholipid surfaces. Required for the assembly and secretion of plasma lipoproteins that contain apolipoprotein B. May be involved in regulating cholesteryl ester biosynthesis in cells that produce lipoproteins. Its function is as follows. Critical for the development of natural killer T (NKT) cells. Required for the assembly and secretion of plasma lipoproteins that contain apolipoprotein B. This is Microsomal triglyceride transfer protein large subunit (Mttp) from Mus musculus (Mouse).